Consider the following 84-residue polypeptide: Putative membrane protein insertion efficiency factor (84 aa).

Residues 64–84 (GGSGYDPPPPRHQPRKWKCEE) form a disordered region. Basic residues predominate over residues 75 to 84 (HQPRKWKCEE).

It belongs to the UPF0161 family.

It localises to the cell inner membrane. Its function is as follows. Could be involved in insertion of integral membrane proteins into the membrane. The protein is Putative membrane protein insertion efficiency factor of Caulobacter vibrioides (strain ATCC 19089 / CIP 103742 / CB 15) (Caulobacter crescentus).